We begin with the raw amino-acid sequence, 443 residues long: ATP-dependent protease ATPase subunit HslU (443 aa).

ATP-binding positions include Ile-18, 60–65, Asp-256, Glu-321, and Arg-393; that span reads GVGKTE.

The protein belongs to the ClpX chaperone family. HslU subfamily. As to quaternary structure, a double ring-shaped homohexamer of HslV is capped on each side by a ring-shaped HslU homohexamer. The assembly of the HslU/HslV complex is dependent on binding of ATP.

The protein localises to the cytoplasm. In terms of biological role, ATPase subunit of a proteasome-like degradation complex; this subunit has chaperone activity. The binding of ATP and its subsequent hydrolysis by HslU are essential for unfolding of protein substrates subsequently hydrolyzed by HslV. HslU recognizes the N-terminal part of its protein substrates and unfolds these before they are guided to HslV for hydrolysis. This chain is ATP-dependent protease ATPase subunit HslU, found in Histophilus somni (strain 2336) (Haemophilus somnus).